The primary structure comprises 192 residues: Bifunctional protein PyrR (192 aa).

Residues 49–50 (SG), Arg-90, 111–119 (DDVLFSGRT), Arg-144, and Val-168 each bind substrate. Residues 107–119 (VILVDDVLFSGRT) carry the PRPP-binding motif.

It belongs to the purine/pyrimidine phosphoribosyltransferase family. PyrR subfamily.

It catalyses the reaction UMP + diphosphate = 5-phospho-alpha-D-ribose 1-diphosphate + uracil. Regulates the transcription of the pyrimidine nucleotide (pyr) operon in response to exogenous pyrimidines. Its function is as follows. Also displays a weak uracil phosphoribosyltransferase activity which is not physiologically significant. This is Bifunctional protein PyrR from Corynebacterium glutamicum (strain ATCC 13032 / DSM 20300 / JCM 1318 / BCRC 11384 / CCUG 27702 / LMG 3730 / NBRC 12168 / NCIMB 10025 / NRRL B-2784 / 534).